We begin with the raw amino-acid sequence, 304 residues long: N-acetyl-D-glucosamine kinase (304 aa).

ATP-binding positions include 4–11 (GFDIGGTK) and 133–140 (GFGGGLIF). Zn(2+) is bound by residues H157, C178, C180, and C185.

It belongs to the ROK (NagC/XylR) family. NagK subfamily.

It catalyses the reaction N-acetyl-D-glucosamine + ATP = N-acetyl-D-glucosamine 6-phosphate + ADP + H(+). Its pathway is cell wall biogenesis; peptidoglycan recycling. Catalyzes the phosphorylation of N-acetyl-D-glucosamine (GlcNAc) derived from cell-wall degradation, yielding GlcNAc-6-P. This chain is N-acetyl-D-glucosamine kinase, found in Mannheimia succiniciproducens (strain KCTC 0769BP / MBEL55E).